The chain runs to 251 residues: Triosephosphate isomerase (251 aa).

9–11 (NWK) is a binding site for substrate. Residue H95 is the Electrophile of the active site. Catalysis depends on E167, which acts as the Proton acceptor. Substrate is bound by residues G173, S213, and 234–235 (GG). S213 carries the phosphoserine modification.

Belongs to the triosephosphate isomerase family. Homodimer.

It is found in the cytoplasm. The enzyme catalyses D-glyceraldehyde 3-phosphate = dihydroxyacetone phosphate. The protein operates within carbohydrate biosynthesis; gluconeogenesis. Its pathway is carbohydrate degradation; glycolysis; D-glyceraldehyde 3-phosphate from glycerone phosphate: step 1/1. Involved in the gluconeogenesis. Catalyzes stereospecifically the conversion of dihydroxyacetone phosphate (DHAP) to D-glyceraldehyde-3-phosphate (G3P). The chain is Triosephosphate isomerase from Priestia megaterium (strain DSM 319 / IMG 1521) (Bacillus megaterium).